The following is a 122-amino-acid chain: Small ribosomal subunit protein uS13 (122 aa).

Residues Gly-95–Lys-122 are disordered.

This sequence belongs to the universal ribosomal protein uS13 family. In terms of assembly, part of the 30S ribosomal subunit. Forms a loose heterodimer with protein S19. Forms two bridges to the 50S subunit in the 70S ribosome.

Functionally, located at the top of the head of the 30S subunit, it contacts several helices of the 16S rRNA. In the 70S ribosome it contacts the 23S rRNA (bridge B1a) and protein L5 of the 50S subunit (bridge B1b), connecting the 2 subunits; these bridges are implicated in subunit movement. Contacts the tRNAs in the A and P-sites. This Corynebacterium diphtheriae (strain ATCC 700971 / NCTC 13129 / Biotype gravis) protein is Small ribosomal subunit protein uS13.